The primary structure comprises 130 residues: Nascent polypeptide-associated complex protein (130 aa).

The region spanning 6–74 (GMNPRKMQQM…PVERDAADAI (69 aa)) is the NAC-A/B domain. Residues 65–91 (PVERDAADAIEAAPADDSDDTDDDDAI) form a disordered region. A compositionally biased stretch (acidic residues) spans 78–90 (PADDSDDTDDDDA).

This sequence belongs to the NAC-alpha family. Homodimer. Interacts with the ribosome. Binds ribosomal RNA.

Functionally, contacts the emerging nascent chain on the ribosome. In Halobacterium salinarum (strain ATCC 700922 / JCM 11081 / NRC-1) (Halobacterium halobium), this protein is Nascent polypeptide-associated complex protein.